A 304-amino-acid chain; its full sequence is Taste receptor type 2 member 4 (304 aa).

Topologically, residues 1 to 10 (MLWELYAFVF) are extracellular. A helical membrane pass occupies residues 11–31 (AASVVFNFVGIVANLFIIVII). Residues 32 to 46 (SKTWVKSHKISSSDK) are Cytoplasmic-facing. Residues 47–67 (ILFSLAITRFLTLGLFLLNTV) form a helical membrane-spanning segment. The Extracellular segment spans residues 68–80 (YIATNTGRSVYFS). The chain crosses the membrane as a helical span at residues 81–101 (TFFLLCWKFLDSNSLWLVTFL). Over 102 to 128 (NCLYCVKITHFQHPVFLLLKRTVSMKT) the chain is Cytoplasmic. Residues 129–149 (TSLLLACLLISAFTTLLYFVL) traverse the membrane as a helical segment. The Extracellular segment spans residues 150–171 (TQISRFPEHIIGRNDTLFDVSD). Residue asparagine 163 is glycosylated (N-linked (GlcNAc...) asparagine). A helical membrane pass occupies residues 172–192 (GILTLAASLILSSLLQFLLNV). The Cytoplasmic portion of the chain corresponds to 193 to 229 (TFASLLIHSLRRHVQKMQRNRSSFWNPQTEAHVGAMR). The chain crosses the membrane as a helical span at residues 230–250 (LMICFLVLYIPYSIAALLYFP). At 251–260 (SYMRKNLRAQ) the chain is on the extracellular side. A helical membrane pass occupies residues 261–281 (AACMIITAAYPPGHSILLIIT). Topologically, residues 282-304 (HHKLKAKAKKICCFYKLRDFVSN) are cytoplasmic.

Belongs to the G-protein coupled receptor T2R family. Expressed in tongue, stomach and duodenum.

It localises to the membrane. The protein localises to the cell projection. The protein resides in the cilium membrane. In terms of biological role, gustducin-coupled receptor implicated in the perception of bitter compounds in the oral cavity and the gastrointestinal tract. Signals through PLCB2 and the calcium-regulated cation channel TRPM5. In airway epithelial cells, binding of denatonium increases the intracellular calcium ion concentration and stimulates ciliary beat frequency. The sequence is that of Taste receptor type 2 member 4 from Rattus norvegicus (Rat).